Reading from the N-terminus, the 178-residue chain is Large ribosomal subunit protein bL25 (178 aa).

This sequence belongs to the bacterial ribosomal protein bL25 family. CTC subfamily. Part of the 50S ribosomal subunit; part of the 5S rRNA/L5/L18/L25 subcomplex. Contacts the 5S rRNA. Binds to the 5S rRNA independently of L5 and L18.

In terms of biological role, this is one of the proteins that binds to the 5S RNA in the ribosome where it forms part of the central protuberance. The sequence is that of Large ribosomal subunit protein bL25 from Helicobacter pylori (strain P12).